Here is a 1095-residue protein sequence, read N- to C-terminus: 1-phosphatidylinositol 4,5-bisphosphate phosphodiesterase (1095 aa).

The 151-residue stretch at 319-469 folds into the PI-PLC X-box domain; it reads MEMDQPLAHY…LKRKILIKNK (151 aa). Residues His334 and His381 contribute to the active site. Lys467 and Lys469 together coordinate substrate. The tract at residues 487-529 is disordered; that stretch reads ELKTDDDPEEDASAGKPPEAAAAPAPAPEAAAAAEGAAEGGGG. Residues 500-523 are compositionally biased toward low complexity; that stretch reads AGKPPEAAAAPAPAPEAAAAAEGA. Positions 550-666 constitute a PI-PLC Y-box domain; the sequence is LSSMVNYAQP…GYLLKPDFMR (117 aa). 2 residues coordinate substrate: Ser579 and Arg606. Positions 666–794 constitute a C2 domain; the sequence is RRADKDFDPF…SLRTEANFPM (129 aa). Disordered regions lie at residues 842–863 and 1000–1030; these read IEEQ…EKKE and QAKM…LREK. Basic and acidic residues-rich tracts occupy residues 852–863 and 1007–1030; these read DAGKAKEEEKKE and TAKE…LREK.

Interacts with inaD. In terms of tissue distribution, abundantly expressed in the adult retina.

It carries out the reaction a 1,2-diacyl-sn-glycero-3-phospho-(1D-myo-inositol-4,5-bisphosphate) + H2O = 1D-myo-inositol 1,4,5-trisphosphate + a 1,2-diacyl-sn-glycerol + H(+). Functionally, the production of the second messenger molecules diacylglycerol (DAG) and inositol 1,4,5-trisphosphate (IP3) is mediated by activated phosphatidylinositol-specific phospholipase C enzymes. Essential component of the phototransduction pathway. Essential downstream component of a hh-signaling pathway which regulates the Duox-dependent gut immune response to bacterial uracil; required for the activation of Cad99C and consequently Cad99C-dependent endosome formation, which is essential for the Duox-dependent production of reactive oxygen species (ROS) in response to intestinal bacterial infection. This is 1-phosphatidylinositol 4,5-bisphosphate phosphodiesterase from Drosophila melanogaster (Fruit fly).